We begin with the raw amino-acid sequence, 116 residues long: Small ribosomal subunit protein bS16 (116 aa).

Belongs to the bacterial ribosomal protein bS16 family.

The chain is Small ribosomal subunit protein bS16 from Chlamydia trachomatis serovar L2 (strain ATCC VR-902B / DSM 19102 / 434/Bu).